We begin with the raw amino-acid sequence, 127 residues long: Mitochondrial pyruvate carrier 2 (127 aa).

Over 2-40 the chain is Mitochondrial matrix; sequence AAAGARGLRATYHRLMDKVELLLPKKLRPLYNHPAGPRT. Lysine 26 bears the N6-acetyllysine mark. Residues 41–61 traverse the membrane as a helical segment; that stretch reads VFFWAPIMKWGLVCAGLADMA. At 62-72 the chain is on the mitochondrial intermembrane side; that stretch reads RPAEKLSTAQS. Residues 73–90 traverse the membrane as a helical segment; the sequence is TVLMATGFIWSRYSLVII. Residues 91–95 lie on the Mitochondrial matrix side of the membrane; that stretch reads PKNWS. The helical transmembrane segment at 96–115 threads the bilayer; that stretch reads LFAVNFFVGSAGASQLFRIW. Topologically, residues 116-127 are mitochondrial intermembrane; it reads KYNQELKSKGIQ.

This sequence belongs to the mitochondrial pyruvate carrier (MPC) (TC 2.A.105) family. In terms of assembly, homodimer. Homooligomer. Forms heterodimers with MPC1 and MPC1L. The heterodimer is the more stable and dominant form. In terms of tissue distribution, liver, kidney, and brain.

The protein resides in the mitochondrion inner membrane. It catalyses the reaction pyruvate(out) + H(+)(out) = pyruvate(in) + H(+)(in). Its function is as follows. Mediates the uptake of pyruvate into mitochondria. This chain is Mitochondrial pyruvate carrier 2 (Mpc2), found in Rattus norvegicus (Rat).